Here is a 392-residue protein sequence, read N- to C-terminus: UDP-N-acetylglucosamine--N-acetylmuramyl-(pentapeptide) pyrophosphoryl-undecaprenol N-acetylglucosamine transferase (392 aa).

UDP-N-acetyl-alpha-D-glucosamine-binding positions include 14–16 (TGG), Asn-124, Arg-167, Ser-195, Ile-251, and Gln-296.

This sequence belongs to the glycosyltransferase 28 family. MurG subfamily.

Its subcellular location is the cell inner membrane. It carries out the reaction di-trans,octa-cis-undecaprenyl diphospho-N-acetyl-alpha-D-muramoyl-L-alanyl-D-glutamyl-meso-2,6-diaminopimeloyl-D-alanyl-D-alanine + UDP-N-acetyl-alpha-D-glucosamine = di-trans,octa-cis-undecaprenyl diphospho-[N-acetyl-alpha-D-glucosaminyl-(1-&gt;4)]-N-acetyl-alpha-D-muramoyl-L-alanyl-D-glutamyl-meso-2,6-diaminopimeloyl-D-alanyl-D-alanine + UDP + H(+). Its pathway is cell wall biogenesis; peptidoglycan biosynthesis. In terms of biological role, cell wall formation. Catalyzes the transfer of a GlcNAc subunit on undecaprenyl-pyrophosphoryl-MurNAc-pentapeptide (lipid intermediate I) to form undecaprenyl-pyrophosphoryl-MurNAc-(pentapeptide)GlcNAc (lipid intermediate II). The polypeptide is UDP-N-acetylglucosamine--N-acetylmuramyl-(pentapeptide) pyrophosphoryl-undecaprenol N-acetylglucosamine transferase (Sphingopyxis alaskensis (strain DSM 13593 / LMG 18877 / RB2256) (Sphingomonas alaskensis)).